The sequence spans 503 residues: Glycerol kinase (503 aa).

An ADP-binding site is contributed by threonine 14. ATP-binding residues include threonine 14, threonine 15, and serine 16. Residue threonine 14 participates in sn-glycerol 3-phosphate binding. Arginine 18 serves as a coordination point for ADP. 4 residues coordinate sn-glycerol 3-phosphate: arginine 84, glutamate 85, tyrosine 136, and aspartate 246. Arginine 84, glutamate 85, tyrosine 136, aspartate 246, and glutamine 247 together coordinate glycerol. Residues threonine 268 and glycine 311 each coordinate ADP. 4 residues coordinate ATP: threonine 268, glycine 311, glutamine 315, and glycine 412. ADP is bound by residues glycine 412 and asparagine 416. The segment covering 468 to 481 has biased composition (basic and acidic residues); that stretch reads ERTFSPDSDNEKRE. A disordered region spans residues 468–489; sequence ERTFSPDSDNEKRERRYKGWKK.

Belongs to the FGGY kinase family.

It carries out the reaction glycerol + ATP = sn-glycerol 3-phosphate + ADP + H(+). It functions in the pathway polyol metabolism; glycerol degradation via glycerol kinase pathway; sn-glycerol 3-phosphate from glycerol: step 1/1. Inhibited by fructose 1,6-bisphosphate (FBP). Its function is as follows. Key enzyme in the regulation of glycerol uptake and metabolism. Catalyzes the phosphorylation of glycerol to yield sn-glycerol 3-phosphate. This is Glycerol kinase from Haemophilus influenzae (strain ATCC 51907 / DSM 11121 / KW20 / Rd).